The following is a 249-amino-acid chain: LexA repressor (249 aa).

Residues 1-26 (MAAQATGGRATQRSQQSPAKPKGLTV) are disordered. The span at 9–18 (RATQRSQQSP) shows a compositional bias: polar residues. Positions 48 to 68 (MREIGDTVGLASLSSVTHQLS) form a DNA-binding region, H-T-H motif. Catalysis depends on for autocatalytic cleavage activity residues S173 and K210.

The protein belongs to the peptidase S24 family. As to quaternary structure, homodimer.

The catalysed reaction is Hydrolysis of Ala-|-Gly bond in repressor LexA.. Functionally, represses a number of genes involved in the response to DNA damage (SOS response), including recA and lexA. In the presence of single-stranded DNA, RecA interacts with LexA causing an autocatalytic cleavage which disrupts the DNA-binding part of LexA, leading to derepression of the SOS regulon and eventually DNA repair. This chain is LexA repressor, found in Arthrobacter sp. (strain FB24).